The chain runs to 643 residues: Threonine--tRNA ligase (643 aa).

A TGS domain is found at Met-1–Thr-61. Residues Asp-243 to Pro-534 form a catalytic region. Positions 334, 385, and 511 each coordinate Zn(2+).

It belongs to the class-II aminoacyl-tRNA synthetase family. In terms of assembly, homodimer. Zn(2+) serves as cofactor.

It localises to the cytoplasm. The enzyme catalyses tRNA(Thr) + L-threonine + ATP = L-threonyl-tRNA(Thr) + AMP + diphosphate + H(+). Its function is as follows. Catalyzes the attachment of threonine to tRNA(Thr) in a two-step reaction: L-threonine is first activated by ATP to form Thr-AMP and then transferred to the acceptor end of tRNA(Thr). Also edits incorrectly charged L-seryl-tRNA(Thr). The protein is Threonine--tRNA ligase of Haemophilus influenzae (strain PittEE).